The primary structure comprises 130 residues: MAKDYSRTQRIGDQMQRELAQLIQREIKDPRLGLVTITGVEVSRDVAHAKVFITVMGQDDAGKIALNMEILNDAAGYLRMLLGKSMKLRSVPQLHFHYDESIRRGAELSALIERAVAEDGRRHGDDETED.

This sequence belongs to the RbfA family. Monomer. Binds 30S ribosomal subunits, but not 50S ribosomal subunits or 70S ribosomes.

The protein resides in the cytoplasm. Its function is as follows. One of several proteins that assist in the late maturation steps of the functional core of the 30S ribosomal subunit. Associates with free 30S ribosomal subunits (but not with 30S subunits that are part of 70S ribosomes or polysomes). Required for efficient processing of 16S rRNA. May interact with the 5'-terminal helix region of 16S rRNA. In Pseudomonas aeruginosa (strain LESB58), this protein is Ribosome-binding factor A.